The sequence spans 425 residues: 2-oxoglutarate and iron-dependent oxygenase JMJD4 (425 aa).

The region spanning 141–300 (SRAFPEQDVY…IMWCFLQDEL (160 aa)) is the JmjC domain. Residues H188, D190, and H268 each contribute to the Fe cation site.

The protein belongs to the JMJD6 family. The cofactor is Fe(2+).

The protein resides in the cytoplasm. It carries out the reaction L-lysyl-[protein] + 2-oxoglutarate + O2 = 4-hydroxy-L-lysyl-[protein] + succinate + CO2. Its function is as follows. Catalyzes the 2-oxoglutarate and iron-dependent C4-lysyl hydroxylation of ETF1 at 'Lys-63' thereby promoting the translational termination efficiency of ETF1. This Gallus gallus (Chicken) protein is 2-oxoglutarate and iron-dependent oxygenase JMJD4 (JMJD4).